A 1996-amino-acid chain; its full sequence is Non-reducing polyketide synthase atnG (1996 aa).

The N-terminal acylcarrier protein transacylase (SAT) domain stretch occupies residues 9-245 (FLFGDQADAP…AELPAFGAVH (237 aa)). Residues 366-794 (SGSVAVIGMS…GGNSCFVLEE (429 aa)) form the Ketosynthase family 3 (KS3) domain. Residues C538, H673, and H713 each act as for beta-ketoacyl synthase activity in the active site. The tract at residues 891-1150 (AFAFTGQGAH…VKYTQAISHC (260 aa)) is malonyl-CoA:ACP transacylase (MAT) domain. The active-site For acyl/malonyl transferase activity is S982. The interval 1263–1392 (HHLVSQDDNG…CCIRQTDEQD (130 aa)) is N-terminal hotdog fold. The PKS/mFAS DH domain occupies 1263-1569 (HHLVSQDDNG…FRKMPRTTLH (307 aa)). Residues 1267-1568 (SQDDNGKEQS…RFRKMPRTTL (302 aa)) form a product template (PT) domain region. Catalysis depends on H1295, which acts as the Proton acceptor; for dehydratase activity. A C-terminal hotdog fold region spans residues 1416–1569 (ASGIANRFQG…FRKMPRTTLH (154 aa)). Catalysis depends on D1481, which acts as the Proton donor; for dehydratase activity. Positions 1573–1621 (GKAVPPKPAKETSHPSVEATAPATTNGRSSATNAQAEAPAPPVNGSNGH) are disordered. Residues 1594–1607 (PATTNGRSSATNAQ) are compositionally biased toward polar residues. The Carrier domain maps to 1620–1697 (GHRKTVESVL…DAQRQLRTLE (78 aa)). At S1657 the chain carries O-(pantetheine 4'-phosphoryl)serine. The thioesterase (TE) domain stretch occupies residues 1725–1923 (KRECNVVLMQ…ERTFVVWAKK (199 aa)).

The protein operates within secondary metabolite biosynthesis; terpenoid biosynthesis. Its function is as follows. Non-reducing polyketide synthase; part of the gene cluster that mediates the biosynthesis of the meroterpenoids arthripenoids. The pathway begins with the HR-PKS atnH that catalyzes two chain-extension steps to form a reduced triketide, which then primes the SAT domain in the NR-PKS atnG to initiate three more cycles of extension to give a linear hexaketide corresponding to the polyketide part of arthripenoids. The FAD-dependent monooxygenase atnJ then performs an oxidative decarboxylation at C11 of the atnH/atnG product, via an electrophilic aromatic hydroxylation with concomitant ipso-decarboxylation. The membrane-bound polyprenyl transferase atnF then introduces a farnesyl group before the FAD-dependent monooxygenase atnK functions as the first epoxidase on terminal C12'-C13' olefin, followed by a second epoxidation on C7'-C8' catalyzed by atnA. The terpene cyclase/mutase atnI then initiates the sequential tricyclic ring formation through protonation of the terminal epoxide and catalyzes the regioselective and stereoselective 6/6/6-tricyclic ring formation. The cytochrome P450 monooxygenase atnM is responsible for hydroxylating both C1' and C10'. The next steps may involve ketoreduction and acetyl transfer by the ketoreductase atnB and the acetyltransferase atnC, and lead to the production of arthripenoid B, the final biosynthetic product of the atn cluster. The hydroquinone moiety in arthripenoid B is prone to undergo spontaneous oxidation to afford a benzoquinone compound, a key intermediate for generating structure diversity. For instance, addition of a cysteine followed by ring contraction gives arthripenoid A, tautomerization gives the main product arthripenoid C, addition of a molecular of water or amine affords arthripenoid D or E, respectively, and loss of one water forms arthripenoid F. The chain is Non-reducing polyketide synthase atnG from Arthrinium sp.